The chain runs to 359 residues: Probable C-C chemokine receptor type 3 (359 aa).

The Extracellular portion of the chain corresponds to 1 to 38; it reads MAFNTDEIKTVVESFETTPYEYEWAPPCEKVRIKELGS. A helical membrane pass occupies residues 39–64; the sequence is WLLPPLYSLVFIIGLLGNMMVVLILI. The Cytoplasmic segment spans residues 65–68; that stretch reads KYRK. A helical transmembrane segment spans residues 69 to 95; sequence LQIMTNIYLFNLAISDLLFLFTVPFWI. Over 96-111 the chain is Extracellular; that stretch reads HYVLWNEWGFGHYMCK. Cys-110 and Cys-187 are disulfide-bonded. Residues 112–133 traverse the membrane as a helical segment; that stretch reads MLSGFYYLALYSEIFFIILLTI. The Cytoplasmic segment spans residues 134-150; the sequence is DRYLAIVHAVFALRART. Residues 151–175 traverse the membrane as a helical segment; sequence VTFATITSIITWGLAGLAALPEFIF. Residues 176–201 lie on the Extracellular side of the membrane; the sequence is HESQDSFGEFSCSPRYPEGEEDSWKR. A helical transmembrane segment spans residues 202–227; sequence FHALRMNIFGLALPLLIMVICYSGII. The Cytoplasmic segment spans residues 228–243; it reads KTLLRCPNKKKHKAIR. Residues 244 to 268 traverse the membrane as a helical segment; the sequence is LIFVVMIVFFIFWTPYNLVLLFSAF. Residues 269–285 are Extracellular-facing; it reads HSTFLETSCQQSKHLDL. Residues 286 to 309 traverse the membrane as a helical segment; that stretch reads AMQVTEVIAYTHCCINPVIYAFVG. Over 310–359 the chain is Cytoplasmic; that stretch reads ERFRKHLRLFFHRNVAVYLGKYIPFLPGEKMERTSSVSPSTGEQEISVVF.

This sequence belongs to the G-protein coupled receptor 1 family. Detected in skeletal muscle and in trace amounts in leukocytes.

It localises to the cell membrane. Receptor for C-C type chemokine. Binds and responds to a variety of chemokines, including CCL11, CCL26, CCL7, CCL13, RANTES(CCL5) and CCL15. Subsequently transduces a signal by increasing the intracellular calcium ions level. In addition acts as a possible functional receptor for NARS1. This chain is Probable C-C chemokine receptor type 3 (Ccr3), found in Mus musculus (Mouse).